The following is a 98-amino-acid chain: MSLVYMNIMTAFAVSLTGLLMYRSHLMSSLLCLEGMMLSLFIMATLMILNSHFTLASMMPIILLVFAACEAALGLSLLVMVSNTYGTDYVQNLNLLQC.

3 helical membrane-spanning segments follow: residues Met-1–Met-21, Ser-29–Leu-49, and Ile-61–Val-81.

It belongs to the complex I subunit 4L family. Core subunit of respiratory chain NADH dehydrogenase (Complex I) which is composed of 45 different subunits.

It is found in the mitochondrion inner membrane. It catalyses the reaction a ubiquinone + NADH + 5 H(+)(in) = a ubiquinol + NAD(+) + 4 H(+)(out). Functionally, core subunit of the mitochondrial membrane respiratory chain NADH dehydrogenase (Complex I) which catalyzes electron transfer from NADH through the respiratory chain, using ubiquinone as an electron acceptor. Part of the enzyme membrane arm which is embedded in the lipid bilayer and involved in proton translocation. In Capra hircus (Goat), this protein is NADH-ubiquinone oxidoreductase chain 4L (MT-ND4L).